The sequence spans 426 residues: Anaerobic glycerol-3-phosphate dehydrogenase subunit C (426 aa).

4Fe-4S ferredoxin-type domains follow at residues Ser-21 to Gly-53 and Lys-67 to Ile-99. [4Fe-4S] cluster is bound by residues Cys-32, Cys-35, Cys-38, Cys-42, Cys-79, Cys-82, Cys-85, and Cys-89.

As to quaternary structure, composed of a catalytic GlpA/B dimer and of GlpC.

It localises to the cell inner membrane. It functions in the pathway polyol metabolism; glycerol degradation via glycerol kinase pathway; glycerone phosphate from sn-glycerol 3-phosphate (anaerobic route): step 1/1. Its function is as follows. Electron transfer protein; may also function as the membrane anchor for the GlpAB dimer. This Haemophilus influenzae (strain ATCC 51907 / DSM 11121 / KW20 / Rd) protein is Anaerobic glycerol-3-phosphate dehydrogenase subunit C (glpC).